A 600-amino-acid polypeptide reads, in one-letter code: UvrABC system protein C (600 aa).

The GIY-YIG domain occupies 15–92 (DKPGCYLMKD…IKKYQPYYNV (78 aa)). The 36-residue stretch at 197 to 232 (AQVKQDLTEKMTQASMDLEFERAAEIRDQLKYIEQT) folds into the UVR domain.

It belongs to the UvrC family. As to quaternary structure, interacts with UvrB in an incision complex.

It localises to the cytoplasm. In terms of biological role, the UvrABC repair system catalyzes the recognition and processing of DNA lesions. UvrC both incises the 5' and 3' sides of the lesion. The N-terminal half is responsible for the 3' incision and the C-terminal half is responsible for the 5' incision. The sequence is that of UvrABC system protein C from Lactobacillus johnsonii (strain CNCM I-12250 / La1 / NCC 533).